A 482-amino-acid chain; its full sequence is ATP synthase subunit beta (482 aa).

161-168 (GGAGVGKT) contributes to the ATP binding site.

The protein belongs to the ATPase alpha/beta chains family. In terms of assembly, F-type ATPases have 2 components, CF(1) - the catalytic core - and CF(0) - the membrane proton channel. CF(1) has five subunits: alpha(3), beta(3), gamma(1), delta(1), epsilon(1). CF(0) has four main subunits: a(1), b(1), b'(1) and c(9-12).

It is found in the cellular thylakoid membrane. It carries out the reaction ATP + H2O + 4 H(+)(in) = ADP + phosphate + 5 H(+)(out). Its function is as follows. Produces ATP from ADP in the presence of a proton gradient across the membrane. The catalytic sites are hosted primarily by the beta subunits. This is ATP synthase subunit beta from Microcystis aeruginosa (strain NIES-843 / IAM M-2473).